Here is a 335-residue protein sequence, read N- to C-terminus: Beta-hexosaminidase (335 aa).

Substrate-binding positions include Asp60, Arg68, Arg133, and 163–164 (KH). His176 (proton donor/acceptor) is an active-site residue. The active-site Nucleophile is the Asp247.

It belongs to the glycosyl hydrolase 3 family. NagZ subfamily. As to quaternary structure, monomer.

The protein localises to the cytoplasm. It catalyses the reaction Hydrolysis of terminal non-reducing N-acetyl-D-hexosamine residues in N-acetyl-beta-D-hexosaminides.. It participates in cell wall biogenesis; peptidoglycan recycling. In terms of biological role, plays a role in peptidoglycan recycling by cleaving the terminal beta-1,4-linked N-acetylglucosamine (GlcNAc) from peptide-linked peptidoglycan fragments, giving rise to free GlcNAc, anhydro-N-acetylmuramic acid and anhydro-N-acetylmuramic acid-linked peptides. This chain is Beta-hexosaminidase, found in Xylella fastidiosa (strain 9a5c).